The chain runs to 193 residues: Large ribosomal subunit protein bL17m (193 aa).

This sequence belongs to the bacterial ribosomal protein bL17 family. In terms of assembly, component of the mitochondrial large ribosomal subunit (mt-LSU). Mature N.crassa 74S mitochondrial ribosomes consist of a small (37S) and a large (54S) subunit. The 37S small subunit contains a 16S ribosomal RNA (16S mt-rRNA) and 32 different proteins. The 54S large subunit contains a 23S rRNA (23S mt-rRNA) and 42 different proteins.

The protein resides in the mitochondrion. Functionally, component of the mitochondrial ribosome (mitoribosome), a dedicated translation machinery responsible for the synthesis of mitochondrial genome-encoded proteins, including at least some of the essential transmembrane subunits of the mitochondrial respiratory chain. The mitoribosomes are attached to the mitochondrial inner membrane and translation products are cotranslationally integrated into the membrane. This is Large ribosomal subunit protein bL17m (mrpl8) from Neurospora crassa (strain ATCC 24698 / 74-OR23-1A / CBS 708.71 / DSM 1257 / FGSC 987).